Here is a 100-residue protein sequence, read N- to C-terminus: MNLTPREKDKLLISMAAMVARRRLERGVKLNYPEAIALISDFVVEGARDGRPVAELMEAGAHVIGRDQVMEGIAEMIHDVQVEATFPDGTKLVTVHEPIR.

Belongs to the urease gamma subunit family. As to quaternary structure, heterotrimer of UreA (gamma), UreB (beta) and UreC (alpha) subunits. Three heterotrimers associate to form the active enzyme.

It localises to the cytoplasm. It catalyses the reaction urea + 2 H2O + H(+) = hydrogencarbonate + 2 NH4(+). Its pathway is nitrogen metabolism; urea degradation; CO(2) and NH(3) from urea (urease route): step 1/1. This is Urease subunit gamma from Rhizobium etli (strain CIAT 652).